We begin with the raw amino-acid sequence, 279 residues long: Elongation factor Ts (279 aa).

The involved in Mg(2+) ion dislocation from EF-Tu stretch occupies residues 80–83 (TDFV).

This sequence belongs to the EF-Ts family.

The protein resides in the cytoplasm. Functionally, associates with the EF-Tu.GDP complex and induces the exchange of GDP to GTP. It remains bound to the aminoacyl-tRNA.EF-Tu.GTP complex up to the GTP hydrolysis stage on the ribosome. The polypeptide is Elongation factor Ts (Borreliella afzelii (strain PKo) (Borrelia afzelii)).